The sequence spans 190 residues: UPF0301 protein Reut_A0705 (190 aa).

The protein belongs to the UPF0301 (AlgH) family.

This chain is UPF0301 protein Reut_A0705, found in Cupriavidus pinatubonensis (strain JMP 134 / LMG 1197) (Cupriavidus necator (strain JMP 134)).